We begin with the raw amino-acid sequence, 163 residues long: MPIVLLGFMGVGKTTTAHLLNLPVYDMDHIIEERIGMPIADYFSLEGEASFRQLETEVLKGLLDLPSNCIVSTGGGVIKSEVNRELLLANREDNVLLTASFEVSYQRIRKDRQSQRPLFLQCSKEEFEALYRERMALYQGLADTVIDTDKLIPEQVARKILCK.

ATP is bound at residue 10–15 (GVGKTT). Residue threonine 14 participates in Mg(2+) binding. Substrate is bound by residues aspartate 28, arginine 52, and glycine 75. Arginine 116 serves as a coordination point for ATP. Arginine 134 is a substrate binding site.

This sequence belongs to the shikimate kinase family. Monomer. Requires Mg(2+) as cofactor.

It is found in the cytoplasm. The enzyme catalyses shikimate + ATP = 3-phosphoshikimate + ADP + H(+). It participates in metabolic intermediate biosynthesis; chorismate biosynthesis; chorismate from D-erythrose 4-phosphate and phosphoenolpyruvate: step 5/7. In terms of biological role, catalyzes the specific phosphorylation of the 3-hydroxyl group of shikimic acid using ATP as a cosubstrate. The protein is Shikimate kinase of Streptococcus suis (strain 98HAH33).